The following is a 377-amino-acid chain: 3-dehydroquinate synthase (377 aa).

Residues 113–117 (GVIGD), 137–138 (TT), lysine 150, and lysine 159 contribute to the NAD(+) site. Zn(2+) contacts are provided by glutamate 192, histidine 254, and histidine 273.

Belongs to the sugar phosphate cyclases superfamily. Dehydroquinate synthase family. Requires Co(2+) as cofactor. It depends on Zn(2+) as a cofactor. NAD(+) is required as a cofactor.

It localises to the cytoplasm. It catalyses the reaction 7-phospho-2-dehydro-3-deoxy-D-arabino-heptonate = 3-dehydroquinate + phosphate. Its pathway is metabolic intermediate biosynthesis; chorismate biosynthesis; chorismate from D-erythrose 4-phosphate and phosphoenolpyruvate: step 2/7. Its function is as follows. Catalyzes the conversion of 3-deoxy-D-arabino-heptulosonate 7-phosphate (DAHP) to dehydroquinate (DHQ). The protein is 3-dehydroquinate synthase of Bartonella bacilliformis (strain ATCC 35685 / KC583 / Herrer 020/F12,63).